Here is a 225-residue protein sequence, read N- to C-terminus: MNSVEFLPLDRITPNSVISTTSNDLSNWSRLSSLWPLLYGTSCCFIEFASLIGSRFDFDRYGLVPRSSPRQADLILTAGTVTMKMAPSLVRLYEQMPEPKYVIAMGACTITGGMFSTDSYSTVRGVDKLIPVDVYLPGCPPKPEAVIDAITKLRKKISWEIYEDRIQSQRKNRYFTIKHKFRVGRRIHTGNYNQGLLSKSPSISEIPPEKFFKYRSSVSSHEFVN.

[4Fe-4S] cluster is bound by residues cysteine 43, cysteine 44, cysteine 108, and cysteine 139.

This sequence belongs to the complex I 20 kDa subunit family. NDH is composed of at least 16 different subunits, 5 of which are encoded in the nucleus. [4Fe-4S] cluster serves as cofactor.

The protein resides in the plastid. It is found in the chloroplast thylakoid membrane. It catalyses the reaction a plastoquinone + NADH + (n+1) H(+)(in) = a plastoquinol + NAD(+) + n H(+)(out). It carries out the reaction a plastoquinone + NADPH + (n+1) H(+)(in) = a plastoquinol + NADP(+) + n H(+)(out). Functionally, NDH shuttles electrons from NAD(P)H:plastoquinone, via FMN and iron-sulfur (Fe-S) centers, to quinones in the photosynthetic chain and possibly in a chloroplast respiratory chain. The immediate electron acceptor for the enzyme in this species is believed to be plastoquinone. Couples the redox reaction to proton translocation, and thus conserves the redox energy in a proton gradient. This is NAD(P)H-quinone oxidoreductase subunit K, chloroplastic from Fagopyrum esculentum subsp. ancestrale (Wild buckwheat).